We begin with the raw amino-acid sequence, 399 residues long: F420-dependent formate dehydrogenase subunit beta (399 aa).

4Fe-4S ferredoxin-type domains are found at residues 287–307 and 339–367; these read TEYM…EACP and ERML…LAKI. The [4Fe-4S] cluster site is built by cysteine 296, cysteine 299, cysteine 302, cysteine 306, cysteine 348, cysteine 351, cysteine 354, and cysteine 358.

The protein belongs to the FrhB family. In terms of assembly, dimer of an alpha (FdhA) and a beta (FdhB) subunit. [4Fe-4S] cluster is required as a cofactor. Requires FAD as cofactor. The cofactor is Zn(2+).

The enzyme catalyses oxidized coenzyme F420-(gamma-L-Glu)(n) + formate + 2 H(+) = reduced coenzyme F420-(gamma-L-Glu)(n) + CO2. Is extremely sensitive to oxygen. Contains a FAD that is required for coenzyme F420-dependent activity but not for methyl viologen-dependent activity. Preincubation of the FAD-depleted enzyme with FAD restores coenzyme F420-dependent activity. Neither FMN nor FADH2 can replace FAD. Strongly inhibited by cyanide, azide, alpha,alpha-dipyridyl and 1,10-phenanthroline. Catalyzes the oxidation of formate to carbon dioxide, with coenzyme F420 as the electron acceptor. In vitro can also use methyl viologen, 7,8-didemethyl-8-hydroxy-5-deazariboflavin (or FO, a hydrolytic derivative of coenzyme F420), FMN and FAD as electron acceptors, but not NAD(+) or NADP(+). The sequence is that of F420-dependent formate dehydrogenase subunit beta from Methanobacterium formicicum.